Consider the following 85-residue polypeptide: Small ribosomal subunit protein bS16 (85 aa).

This sequence belongs to the bacterial ribosomal protein bS16 family.

The protein is Small ribosomal subunit protein bS16 of Clostridium novyi (strain NT).